Reading from the N-terminus, the 1036-residue chain is ADAMTS-like protein 4 (1036 aa).

The signal sequence occupies residues 1 to 24 (MESWLGRLWLCMMLLLPLPQPCQD). One can recognise a TSP type-1 1 domain in the interval 47-91 (GPWGRWASCSQPCGVGVQRRSRTCELHPALPLPPRPPRHPEAHRP). 2 disordered regions span residues 73–149 (HPAL…IKPG) and 163–308 (HRSR…WLPL). Over residues 163–173 (HRSRRHPHRPG) the composition is skewed to basic residues. Over residues 215 to 253 (TPRSGTAQTEVLPRTSSAPSYTGTPAPTSSFGDSRSFQG) the composition is skewed to polar residues. N-linked (GlcNAc...) asparagine glycosylation is found at Asn-454 and Asn-737. TSP type-1 domains follow at residues 687–748 (CPPY…HLCG), 750–804 (WEIS…DMGP), 805–871 (CTTA…GPCE), 872–931 (RTWR…QGQA), and 932–988 (CEDK…QPCN). One can recognise a PLAC domain in the interval 991–1028 (PDDQCKDSSPHCPLVVQARLCVYPYYTTTCCRSCAHVL).

As to quaternary structure, interacts with CTSB. Interacts with FBN1. In terms of processing, glycosylated. Can be O-fucosylated by POFUT2 on a serine or a threonine residue found within the consensus sequence C1-X(2)-(S/T)-C2-G of the TSP type-1 repeat domains where C1 and C2 are the first and second cysteine residue of the repeat, respectively. Fucosylated repeats can then be further glycosylated by the addition of a beta-1,3-glucose residue by the glucosyltransferase, B3GALTL. Fucosylation mediates the efficient secretion of ADAMTS family members. Can also be C-glycosylated with one or two mannose molecules on tryptophan residues within the consensus sequence W-X-X-W of the TPRs, and N-glycosylated. These other glycosylations can also facilitate secretion. In terms of tissue distribution, widely expressed in a range of tissues. Especially prevalent in brain, spinal cord, muscle, lung and heart.

It is found in the secreted. Its subcellular location is the extracellular space. The protein resides in the extracellular matrix. Positive regulation of apoptosis. May facilitate FBN1 microfibril biogenesis. The polypeptide is ADAMTS-like protein 4 (Mus musculus (Mouse)).